The primary structure comprises 647 residues: Threonine--tRNA ligase (647 aa).

Positions 1-61 (MIKITFPDGA…EEDGSIEIVT (61 aa)) constitute a TGS domain. Residues 240 to 538 (DHRKLGKELD…LIETYKGAFP (299 aa)) form a catalytic region. Zn(2+)-binding residues include cysteine 334, histidine 385, and histidine 515.

This sequence belongs to the class-II aminoacyl-tRNA synthetase family. As to quaternary structure, homodimer. Requires Zn(2+) as cofactor.

It localises to the cytoplasm. The enzyme catalyses tRNA(Thr) + L-threonine + ATP = L-threonyl-tRNA(Thr) + AMP + diphosphate + H(+). Functionally, catalyzes the attachment of threonine to tRNA(Thr) in a two-step reaction: L-threonine is first activated by ATP to form Thr-AMP and then transferred to the acceptor end of tRNA(Thr). Also edits incorrectly charged L-seryl-tRNA(Thr). The chain is Threonine--tRNA ligase from Streptococcus agalactiae serotype III (strain NEM316).